A 61-amino-acid polypeptide reads, in one-letter code: Sec-independent protein translocase protein TatA (61 aa).

Residues 1-21 form a helical membrane-spanning segment; the sequence is MFGLGITEILLILGIIILIFG.

This sequence belongs to the TatA/E family. As to quaternary structure, the Tat system comprises two distinct complexes: a TatABC complex, containing multiple copies of TatA, TatB and TatC subunits, and a separate TatA complex, containing only TatA subunits. Substrates initially bind to the TatABC complex, which probably triggers association of the separate TatA complex to form the active translocon.

Its subcellular location is the cell inner membrane. In terms of biological role, part of the twin-arginine translocation (Tat) system that transports large folded proteins containing a characteristic twin-arginine motif in their signal peptide across membranes. TatA could form the protein-conducting channel of the Tat system. This is Sec-independent protein translocase protein TatA from Maridesulfovibrio salexigens (strain ATCC 14822 / DSM 2638 / NCIMB 8403 / VKM B-1763) (Desulfovibrio salexigens).